Here is a 158-residue protein sequence, read N- to C-terminus: Transcription elongation factor GreA (158 aa).

This sequence belongs to the GreA/GreB family.

Necessary for efficient RNA polymerase transcription elongation past template-encoded arresting sites. The arresting sites in DNA have the property of trapping a certain fraction of elongating RNA polymerases that pass through, resulting in locked ternary complexes. Cleavage of the nascent transcript by cleavage factors such as GreA or GreB allows the resumption of elongation from the new 3'terminus. GreA releases sequences of 2 to 3 nucleotides. This Hamiltonella defensa subsp. Acyrthosiphon pisum (strain 5AT) protein is Transcription elongation factor GreA.